Consider the following 259-residue polypeptide: Short chain dehydrogenase ausX (259 aa).

Isoleucine 13, aspartate 59, arginine 121, tyrosine 153, lysine 157, and valine 186 together coordinate NADP(+). The Proton acceptor role is filled by tyrosine 153. The Proton donor role is filled by tyrosine 153. The active-site Lowers pKa of active site Tyr is lysine 157.

Belongs to the short-chain dehydrogenases/reductases (SDR) family.

It participates in secondary metabolite biosynthesis; terpenoid biosynthesis. Its function is as follows. Short chain dehydrogenase; part of the gene cluster A that mediates the biosynthesis of the fungal meroterpenoid acetoxydehydroaustin. The first step of the pathway is the synthesis of 3,5-dimethylorsellinic acid by the polyketide synthase ausA. 3,5-dimethylorsellinic acid is then prenylated by the polyprenyl transferase ausN. Further epoxidation by the FAD-dependent monooxygenase ausM and cyclization by the probable terpene cyclase ausL lead to the formation of protoaustinoid A. Protoaustinoid A is then oxidized to spiro-lactone preaustinoid A3 by the combined action of the FAD-binding monooxygenases ausB and ausC, and the dioxygenase ausE. Acid-catalyzed keto-rearrangement and ring contraction of the tetraketide portion of preaustinoid A3 by ausJ lead to the formation of preaustinoid A4. The aldo-keto reductase ausK, with the help of ausH, is involved in the next step by transforming preaustinoid A4 into isoaustinone which is in turn hydroxylated by the P450 monooxygenase ausI to form austinolide. The cytochrome P450 monooxygenase ausG then modifies austinolide to austinol. Austinol is further acetylated to austin by the O-acetyltransferase ausP, which spontaneously changes to dehydroaustin. The cytochrome P450 monooxygenase then converts dehydroaustin is into 7-dehydrodehydroaustin. The hydroxylation catalyzed by ausR permits the second O-acetyltransferase ausQ to add an additional acetyl group to the molecule, leading to the formation of acetoxydehydroaustin. Due to genetic rearrangements of the clusters and the subsequent loss of some enzymes, the end product of the Penicillium brasilianum austinoid biosynthesis clusters is acetoxydehydroaustin. The chain is Short chain dehydrogenase ausX from Penicillium brasilianum.